A 75-amino-acid chain; its full sequence is Small ribosomal subunit protein bS18c (75 aa).

This sequence belongs to the bacterial ribosomal protein bS18 family. In terms of assembly, part of the 30S ribosomal subunit.

It localises to the plastid. The protein is Small ribosomal subunit protein bS18c of Aneura mirabilis (Parasitic liverwort).